A 257-amino-acid chain; its full sequence is Ribosomal RNA small subunit methyltransferase J (257 aa).

Residues 107 to 108 (RD), 123 to 124 (ER), and D177 contribute to the S-adenosyl-L-methionine site.

Belongs to the methyltransferase superfamily. RsmJ family.

The protein resides in the cytoplasm. The enzyme catalyses guanosine(1516) in 16S rRNA + S-adenosyl-L-methionine = N(2)-methylguanosine(1516) in 16S rRNA + S-adenosyl-L-homocysteine + H(+). Specifically methylates the guanosine in position 1516 of 16S rRNA. The protein is Ribosomal RNA small subunit methyltransferase J of Haemophilus influenzae (strain PittGG).